Here is a 440-residue protein sequence, read N- to C-terminus: Microtubule-associated tumor suppressor 1 homolog (440 aa).

Positions 106 to 401 (IQHLLSEREE…RLSMENEELL (296 aa)) form a coiled coil. Phosphoserine is present on residues S373, S394, S415, S425, S429, S431, S433, S434, and S438. The disordered stretch occupies residues 407 to 440 (GDLCSPKRSPTSSAIPFQSPRNSGSFSSPSISPR). The span at 425-440 (SPRNSGSFSSPSISPR) shows a compositional bias: low complexity.

Belongs to the MTUS1 family. Homodimer. Interacts with AGTR2. Interacts with PTPN6. As to expression, present in neurons (at protein level).

The protein localises to the mitochondrion. Its subcellular location is the golgi apparatus. It localises to the cell membrane. The protein resides in the nucleus. In terms of biological role, cooperates with AGTR2 to inhibit ERK2 activation and cell proliferation. May be required for AGTR2 cell surface expression. Together with PTPN6, induces UBE2V2 expression upon angiotensin-II stimulation. In Rattus norvegicus (Rat), this protein is Microtubule-associated tumor suppressor 1 homolog (Mtus1).